Here is a 3073-residue protein sequence, read N- to C-terminus: Adhesion G-protein coupled receptor G4 (3073 aa).

The first 25 residues, 1–25 (MRKHILHQRLCGLILVSSFIFLTDS), serve as a signal peptide directing secretion. Residues 26–2691 (LSLKGKRLDF…RSTVDAVNER (2666 aa)) are Extracellular-facing. Residues 29–228 (KGKRLDFYGE…SPTVDRRLRC (200 aa)) enclose the Pentraxin (PTX) domain. 2 cysteine pairs are disulfide-bonded: Cys-58–Cys-123 and Cys-200–Cys-228. N-linked (GlcNAc...) asparagine glycosylation is present at Asn-233. The disordered stretch occupies residues 253–272 (SQTTGLNPHKTSHSSTLLPE). Asn-662 carries N-linked (GlcNAc...) asparagine glycosylation. 2 stretches are compositionally biased toward polar residues: residues 671–696 (GNAT…ESKV) and 929–951 (GNSA…SSST). 2 disordered regions span residues 671–697 (GNAT…SKVT) and 924–951 (SEKS…SSST). Residues Asn-1141, Asn-1304, and Asn-1495 are each glycosylated (N-linked (GlcNAc...) asparagine). Disordered stretches follow at residues 1565–1595 (FTSS…AGPT), 1741–1760 (TLTN…STPT), and 1945–1972 (ITLS…SDSR). The segment covering 1945 to 1954 (ITLSSNPSVN) has biased composition (polar residues). The segment covering 1955–1972 (SRATSPTWSSSSLPSDSR) has biased composition (low complexity). The GAIN-B domain occupies 2535 to 2684 (SSEEVIAPQI…GVLMDLSRST (150 aa)). Intrachain disulfides connect Cys-2635/Cys-2666 and Cys-2654/Cys-2668. The interval 2635–2684 (CAFWDFDTNNGLGGWNPSGCKLKESNINYTICQCNHLTHFGVLMDLSRST) is GPS. Residues 2673–2684 (HFGVLMDLSRST) are stachel. The chain crosses the membrane as a helical span at residues 2692–2712 (ILVIITYTGCGISSIFLGIAM). The Cytoplasmic portion of the chain corresponds to 2713 to 2728 (VTYIAFHKLRKDYPSK). The helical transmembrane segment at 2729-2749 (ILINLCTALLMLNLAFLVNSW) threads the bilayer. Residues 2750 to 2755 (LTSFQK) lie on the Extracellular side of the membrane. Residues 2756–2776 (VGLCITAAVALHYFLLVSLTW) traverse the membrane as a helical segment. Cys-2759 and Cys-2836 are disulfide-bonded. Residues 2777–2798 (MGLEAVHMYFALVKVFNTYIPN) are Cytoplasmic-facing. Residues 2799 to 2819 (YILKFCLAGWGIPAITVAIIL) traverse the membrane as a helical segment. At 2820-2842 (SVRKDLYGTLSPTTPFCWIKDDH) the chain is on the extracellular side. The chain crosses the membrane as a helical span at residues 2843 to 2863 (IFYISVVAYFCLIFLMNLSMF). At 2864-2892 (CTVLVQLTSVKSQSQKTRKKMILNDLKGT) the chain is on the cytoplasmic side. Residues 2893–2913 (ISLTFLLGLTWGFAFFAWGPV) form a helical membrane-spanning segment. Residue Arg-2914 is a topological domain, extracellular. A helical transmembrane segment spans residues 2915 to 2935 (IFFLYLFAICNTLQGFLIFVF). The Cytoplasmic segment spans residues 2936–3073 (YCVMKESVRE…SSGLGEMFNL (138 aa)).

Belongs to the G-protein coupled receptor 2 family. Adhesion G-protein coupled receptor (ADGR) subfamily. As to quaternary structure, homodimer; homodimerizes via its Pentraxin domain in a calcium-independent manner. Heterodimer of 2 chains generated by proteolytic processing; the large extracellular N-terminal fragment and the membrane-bound C-terminal fragment predominantly remain associated and non-covalently linked. In terms of processing, autoproteolytically processed at the GPS region of the GAIN-B domain; this cleavage modulates receptor activity.

It is found in the membrane. With respect to regulation, forms a heterodimer of 2 chains generated by proteolytic processing that remain associated through non-covalent interactions mediated by the GAIN-B domain. In the inactivated receptor, the Stachel sequence (also named stalk) is embedded in the GAIN-B domain, where it adopts a beta-strand conformation. On activation, the Stachel moves into the 7 transmembrane region and adopts a twisted hook-shaped configuration that forms contacts within the receptor, leading to coupling of a G-alpha protein, which activates signaling. The cleaved GAIN-B and N-terminal domains can then dissociate from the rest of the receptor. Orphan adhesion G-protein coupled receptor (aGPCR). Ligand binding causes a conformation change that triggers signaling via guanine nucleotide-binding proteins (G proteins) and modulates the activity of downstream effectors, such as adenylate cyclase. ADGRG4 is coupled to G(s) G proteins and mediates activation of adenylate cyclase activity. May be act as sensor of mechanical forces. This chain is Adhesion G-protein coupled receptor G4, found in Mus musculus (Mouse).